Consider the following 2897-residue polypeptide: Chromodomain-helicase-DNA-binding protein 9 (2897 aa).

Polar residues predominate over residues 173 to 201 (QCTSLRSQQNRNNLNPGQNSLSQSKNFMN). Disordered regions lie at residues 173–265 (QCTS…CSVS), 482–525 (QRQP…KQEK), and 537–671 (AKER…SAPL). A Glycyl lysine isopeptide (Lys-Gly) (interchain with G-Cter in SUMO2) cross-link involves residue Lys197. Positions 220 to 235 (SNSQQSISMQQFSQTS) are enriched in low complexity. Composition is skewed to polar residues over residues 247–260 (HQEG…PNMT) and 484–506 (QPPS…TQVR). Lys499 is subject to N6-acetyllysine. Basic and acidic residues predominate over residues 508–525 (MSEKKQRKKVESESKQEK). Ser550 is subject to Phosphoserine. Residues 573-593 (KPKDKDSKKTKTCSKLKEKTK) are compositionally biased toward basic and acidic residues. Residue Lys596 forms a Glycyl lysine isopeptide (Lys-Gly) (interchain with G-Cter in SUMO2) linkage. Ser611 bears the Phosphoserine mark. Residues 634 to 644 (RRSNRQIKRKK) show a composition bias toward basic residues. Residues 645–660 (YAEDIEGKQSEEEVKG) show a composition bias toward basic and acidic residues. Chromo domains follow at residues 690 to 761 (AIVD…HFFA) and 773 to 839 (VEVD…RLDR). Residues 868 to 872 (LNWLL) carry the LXXLL motif 1 motif. A Helicase ATP-binding domain is found at 872–1046 (LFNWYNRRNC…FSLLHFLEPL (175 aa)). Residue 885 to 892 (DEMGLGKT) coordinates ATP. The DEAH box signature appears at 997 to 1000 (DEAH). Positions 1036–1040 (LFSLL) match the LXXLL motif 2 motif. Residues 1186–1337 (LIDKLLPKMK…KAVLQSMSGR (152 aa)) enclose the Helicase C-terminal domain. Positions 1461–1484 (KDELAELSEAESEGDEKPKLRRPC) are disordered. Positions 1465 to 1474 (AELSEAESEG) are enriched in acidic residues. Residues Ser1468 and Ser1472 each carry the phosphoserine modification. Basic and acidic residues predominate over residues 1475-1484 (DEKPKLRRPC). Glycyl lysine isopeptide (Lys-Gly) (interchain with G-Cter in SUMO2) cross-links involve residues Lys1588, Lys1738, and Lys1903. Ser2026 bears the Phosphoserine mark. Positions 2031-2035 (LPRLL) match the LXXLL motif 3 motif. Lys2038 is covalently cross-linked (Glycyl lysine isopeptide (Lys-Gly) (interchain with G-Cter in SUMO2)). Disordered stretches follow at residues 2050–2238 (ENLK…QMNN) and 2305–2337 (GAAT…SKVK). A phosphoserine mark is found at Ser2058 and Ser2059. Lys2074 participates in a covalent cross-link: Glycyl lysine isopeptide (Lys-Gly) (interchain with G-Cter in SUMO2). 2 positions are modified to phosphoserine: Ser2075 and Ser2079. Over residues 2094–2104 (SGGKCETDRRM) the composition is skewed to basic and acidic residues. Positions 2141–2193 (SSCSSRSSSSSSSSSCSHSRSGSSSSSSSSCSSASSSSSSSTSSSSSSSSSSS) are enriched in low complexity. A compositionally biased stretch (basic and acidic residues) spans 2203 to 2216 (AQKRESTTHMKAYD). Positions 2221–2238 (ASLSTTQDETQDSFQMNN) are enriched in polar residues. Residues 2332-2481 (QMSKVKKHVR…LSYTQPQGIP (150 aa)) are binds A/T-rich DNA. Glycyl lysine isopeptide (Lys-Gly) (interchain with G-Cter in SUMO2) cross-links involve residues Lys2350, Lys2356, and Lys2361. The a.T hook-like stretch occupies residues 2429–2436 (KKRRGRRK). Positions 2721 to 2725 (LPNLL) match the LXXLL motif 4 motif. Residues 2729 to 2777 (GLLTKPTESGTEDKKGSDSKESEGKTERTESQSSENGGENSVSSSPSTS) form a disordered region. The segment covering 2739-2758 (TEDKKGSDSKESEGKTERTE) has biased composition (basic and acidic residues). Low complexity predominate over residues 2759 to 2777 (SQSSENGGENSVSSSPSTS). Residues 2793–2797 (LNPLL) carry the LXXLL motif 5 motif. Residues 2827–2897 (VQNKNSDLGS…SEDSDSSNED (71 aa)) are disordered. The span at 2840–2857 (VEVKEEDSRIKDQEDKGG) shows a compositional bias: basic and acidic residues. A Glycyl lysine isopeptide (Lys-Gly) (interchain with G-Cter in SUMO2) cross-link involves residue Lys2843. Residues 2877–2888 (ASSGSDSTSSSS) are compositionally biased toward low complexity.

It belongs to the SNF2/RAD54 helicase family. Interacts with PPARA. Probably interacts with ESR1 and NR1I3. Post-translationally, phosphorylated on serine and tyrosine residues. Widely expressed at low levels. In bone marrow, expression is restricted to osteoprogenitor cells adjacent to mature osteoblasts.

It is found in the cytoplasm. It localises to the nucleus. The catalysed reaction is ATP + H2O = ADP + phosphate + H(+). Probable ATP-dependent chromatin-remodeling factor. Acts as a transcriptional coactivator for PPARA and possibly other nuclear receptors. Has DNA-dependent ATPase activity and binds to A/T-rich DNA. Associates with A/T-rich regulatory regions in promoters of genes that participate in the differentiation of progenitors during osteogenesis. This Homo sapiens (Human) protein is Chromodomain-helicase-DNA-binding protein 9 (CHD9).